Reading from the N-terminus, the 484-residue chain is MNIYTETNKNTGRLIQIIGPVVDIAFPAGNVPNIYNAVVISGKNTAGEDMCVTCEVQQLLGDRCVRAVAMNPTEGLMRGMDATDTGTPLMVPVGKTTLGRIFNVLGEPVDNLGPVETEQKLPIHRSAPAFTDLDTRLAIFETGIKVVDLLAPYRRGGKIGLFGGAGVGKTVLIMELINNIAKAHGGVSVFAGVGERTREGNDLYMEMKESGVINESNLSESKVALVYGQMNEPPGARMRVGLTALTMAEYFRDINKQDVLLFIDNIFRFVQAGSEVSALLGRMPSAVGYQPTLATEMGGLQERITSTKDGSITSIQAVYVPADDLTDPAPATTFAHLDATTVLSRGLAAKGIYPAVDPLDSTSTMLQPWIVGDEHYACAQKVKETLQRYKELQDIIAILGLDELSEEDRLLVARARKIERFLSQPFFVAEVFTGSPGKYVALAETIRGFKMVFAGELDSLPEQAFYLVGSIDEVIAKAAALTSK.

Residue 163 to 170 (GGAGVGKT) participates in ATP binding.

It belongs to the ATPase alpha/beta chains family. In terms of assembly, F-type ATPases have 2 components, CF(1) - the catalytic core - and CF(0) - the membrane proton channel. CF(1) has five subunits: alpha(3), beta(3), gamma(1), delta(1), epsilon(1). CF(0) has four main subunits: a(1), b(1), b'(1) and c(9-12).

It localises to the plastid. It is found in the chloroplast thylakoid membrane. The catalysed reaction is ATP + H2O + 4 H(+)(in) = ADP + phosphate + 5 H(+)(out). Functionally, produces ATP from ADP in the presence of a proton gradient across the membrane. The catalytic sites are hosted primarily by the beta subunits. This chain is ATP synthase subunit beta, chloroplastic, found in Stigeoclonium helveticum (Green alga).